A 353-amino-acid chain; its full sequence is tRNA N(3)-cytidine methyltransferase METTL2 (353 aa).

The disordered stretch occupies residues 1–37; it reads MAAPVVAADSPVIENMPETAGGATENSAEAQKRPQFG. S-adenosyl-L-methionine is bound by residues tryptophan 93, tyrosine 97, glycine 165, aspartate 190, aspartate 216, and isoleucine 237.

Belongs to the methyltransferase superfamily. METL family. As to quaternary structure, monomer.

Its subcellular location is the cytoplasm. The catalysed reaction is cytidine(32) in tRNA(Thr) + S-adenosyl-L-methionine = N(3)-methylcytidine(32) in tRNA(Thr) + S-adenosyl-L-homocysteine + H(+). The enzyme catalyses cytidine(32) in tRNA(Arg)(CCU) + S-adenosyl-L-methionine = N(3)-methylcytidine(32) in tRNA(Arg)(CCU) + S-adenosyl-L-homocysteine + H(+). Functionally, S-adenosyl-L-methionine-dependent methyltransferase that mediates N(3)-methylcytidine modification of residue 32 of the tRNA anticodon loop of tRNA(Thr)(UGU) and tRNA(Arg)(CCU). N(3)-methylcytidine methylation by mettl2a requires the N6-threonylcarbamoylation of tRNA (t6A37) by the EKC/KEOPS complex as prerequisite. The chain is tRNA N(3)-cytidine methyltransferase METTL2 (mettl2a) from Danio rerio (Zebrafish).